The primary structure comprises 451 residues: Protein SAR DEFICIENT 1 (451 aa).

A DNA-binding region spans residues 149 to 270 (DKWTSDEFES…AFHKKLSSRH (122 aa)).

It belongs to the plant ACBP60 protein family. (Microbial infection) Interacts with V.dahliae SCP41.

Its subcellular location is the nucleus. Its function is as follows. Transcription activator that binds DNA in a sequence-specific manner, 5'-GAAATTTTGG-3', to promote the expression of target genes. Recruited to the promoter of ICS1 and other defense-related genes (e.g. PR1 and SID2) in response to both biotic (e.g. Pseudomonas syringae pv. maculicola ES4326) and abiotic stresses (e.g. UV-B), thus triggering slow defense responses by stimulating salicylic acid (SA) biosynthesis. Required for basal and systemic acquired resistance to P.syringae pv. maculicola and Hyaloperonospora arabidopsidis. This is Protein SAR DEFICIENT 1 from Arabidopsis thaliana (Mouse-ear cress).